The primary structure comprises 193 residues: Holliday junction branch migration complex subunit RuvA (193 aa).

The interval 1-64 (MITSLTGTIL…EDAHLLYGFM (64 aa)) is domain I. Residues 65 to 139 (TVAERDMFRL…DKMGGIAPGP (75 aa)) form a domain II region. The tract at residues 139 to 143 (PMGRG) is flexible linker. The domain III stretch occupies residues 144–193 (GAGDPRQEAIAALLTLGYKPAQASQAIAGLADGLGLEDLIRQSLQNLSRH).

The protein belongs to the RuvA family. In terms of assembly, homotetramer. Forms an RuvA(8)-RuvB(12)-Holliday junction (HJ) complex. HJ DNA is sandwiched between 2 RuvA tetramers; dsDNA enters through RuvA and exits via RuvB. An RuvB hexamer assembles on each DNA strand where it exits the tetramer. Each RuvB hexamer is contacted by two RuvA subunits (via domain III) on 2 adjacent RuvB subunits; this complex drives branch migration. In the full resolvosome a probable DNA-RuvA(4)-RuvB(12)-RuvC(2) complex forms which resolves the HJ.

The protein resides in the cytoplasm. In terms of biological role, the RuvA-RuvB-RuvC complex processes Holliday junction (HJ) DNA during genetic recombination and DNA repair, while the RuvA-RuvB complex plays an important role in the rescue of blocked DNA replication forks via replication fork reversal (RFR). RuvA specifically binds to HJ cruciform DNA, conferring on it an open structure. The RuvB hexamer acts as an ATP-dependent pump, pulling dsDNA into and through the RuvAB complex. HJ branch migration allows RuvC to scan DNA until it finds its consensus sequence, where it cleaves and resolves the cruciform DNA. The chain is Holliday junction branch migration complex subunit RuvA from Acidithiobacillus ferrooxidans (strain ATCC 53993 / BNL-5-31) (Leptospirillum ferrooxidans (ATCC 53993)).